The sequence spans 498 residues: ATP synthase subunit beta, chloroplastic (498 aa).

Residue 172-179 (GGAGVGKT) coordinates ATP.

The protein belongs to the ATPase alpha/beta chains family. As to quaternary structure, F-type ATPases have 2 components, CF(1) - the catalytic core - and CF(0) - the membrane proton channel. CF(1) has five subunits: alpha(3), beta(3), gamma(1), delta(1), epsilon(1). CF(0) has four main subunits: a(1), b(1), b'(1) and c(9-12).

It is found in the plastid. It localises to the chloroplast thylakoid membrane. The enzyme catalyses ATP + H2O + 4 H(+)(in) = ADP + phosphate + 5 H(+)(out). Produces ATP from ADP in the presence of a proton gradient across the membrane. The catalytic sites are hosted primarily by the beta subunits. The protein is ATP synthase subunit beta, chloroplastic of Nymphaea odorata (White water lily).